A 305-amino-acid chain; its full sequence is Large ribosomal subunit protein uL3c (305 aa).

A chloroplast-targeting transit peptide spans 1-84; it reads MAAILPTFSI…AVGGLEIKMM (84 aa). A disordered region spans residues 228 to 256; it reads SHRALGSIGAGTTPGHVYKGKKMPGRMGG.

In terms of assembly, component of the chloroplast large ribosomal subunit (LSU). Mature 70S chloroplast ribosomes of higher plants consist of a small (30S) and a large (50S) subunit. The 30S small subunit contains 1 molecule of ribosomal RNA (16S rRNA) and 24 different proteins. The 50S large subunit contains 3 rRNA molecules (23S, 5S and 4.5S rRNA) and 33 different proteins.

The protein resides in the plastid. The protein localises to the chloroplast. Component of the chloroplast ribosome (chloro-ribosome), a dedicated translation machinery responsible for the synthesis of chloroplast genome-encoded proteins, including proteins of the transcription and translation machinery and components of the photosynthetic apparatus. The chain is Large ribosomal subunit protein uL3c (RPL3) from Spinacia oleracea (Spinach).